The sequence spans 424 residues: Serine--tRNA ligase (424 aa).

Position 230–232 (230–232) interacts with L-serine; that stretch reads TAE. 261-263 is a binding site for ATP; sequence RSE. Glutamate 284 is an L-serine binding site. Position 348–351 (348–351) interacts with ATP; sequence EISS. An L-serine-binding site is contributed by serine 384.

It belongs to the class-II aminoacyl-tRNA synthetase family. Type-1 seryl-tRNA synthetase subfamily. Homodimer. The tRNA molecule binds across the dimer.

The protein resides in the cytoplasm. It catalyses the reaction tRNA(Ser) + L-serine + ATP = L-seryl-tRNA(Ser) + AMP + diphosphate + H(+). It carries out the reaction tRNA(Sec) + L-serine + ATP = L-seryl-tRNA(Sec) + AMP + diphosphate + H(+). It functions in the pathway aminoacyl-tRNA biosynthesis; selenocysteinyl-tRNA(Sec) biosynthesis; L-seryl-tRNA(Sec) from L-serine and tRNA(Sec): step 1/1. Catalyzes the attachment of serine to tRNA(Ser). Is also able to aminoacylate tRNA(Sec) with serine, to form the misacylated tRNA L-seryl-tRNA(Sec), which will be further converted into selenocysteinyl-tRNA(Sec). The chain is Serine--tRNA ligase from Streptococcus pneumoniae (strain Hungary19A-6).